Consider the following 1938-residue polypeptide: Myosin heavy chain, striated muscle (1938 aa).

The Myosin N-terminal SH3-like domain occupies 29-79 (DGKKNCWVPDEKEGFASAEIQSSKGDEITVKIVADSSTRTVKKDDIQSMNP). One can recognise a Myosin motor domain in the interval 83–775 (EKLEDMANMT…VLGNLEEMRD (693 aa)). An ATP-binding site is contributed by 176–183 (GESGAGKT). The interval 653-675 (LNKLMKNLYSTHPHFVRCIIPNE) is actin-binding. Residues 778-805 (LSKIISMFQAHIRGYLIRKAYKKLQDQR) form the IQ domain. The tract at residues 836–1938 (LLSIARQEEE…RSSVSVSASN (1103 aa)) is rodlike tail (S2 and LMM domains). The stretch at 836–1938 (LLSIARQEEE…RSSVSVSASN (1103 aa)) forms a coiled coil. Basic and acidic residues-rich tracts occupy residues 1041 to 1058 (VRGD…DLKS) and 1212 to 1225 (SKLE…KREM). Disordered regions lie at residues 1041–1062 (VRGD…TQEN), 1187–1332 (SALR…EVRN), 1344–1363 (LEEE…KANN), and 1898–1938 (HELE…SASN). The segment covering 1265–1285 (RSINELQSQKSRLQAENSDLT) has biased composition (polar residues). Basic and acidic residues-rich tracts occupy residues 1286-1303 (RQLE…KEKS), 1310-1332 (EDAR…EVRN), and 1344-1354 (LEEEQESKSDV). A compositionally biased stretch (low complexity) spans 1922-1938 (RSSVSVQRSSVSVSASN).

Belongs to the TRAFAC class myosin-kinesin ATPase superfamily. Myosin family. In terms of assembly, muscle myosin is a hexameric protein that consists of 2 heavy chain subunits (MHC), 2 alkali light chain subunits (MLC) and 2 regulatory light chain subunits (MLC-2).

Its subcellular location is the cytoplasm. The protein localises to the myofibril. Muscle contraction. Its function is as follows. Myosin is a protein that binds to F-actin and has ATPase activity that is activated by F-actin. This Argopecten irradians (Bay scallop) protein is Myosin heavy chain, striated muscle.